Reading from the N-terminus, the 640-residue chain is MMKIIAAFLFLLVTTFVSRCLSADIESDKQALLEFASLVPHSRKLNWNSTIPICASWTGITCSKNNARVTALRLPGSGLYGPLPEKTFEKLDALRIISLRSNHLQGNIPSVILSLPFIRSLYFHENNFSGTIPPVLSHRLVNLDLSANSLSGNIPTSLQNLTQLTDLSLQNNSLSGPIPNLPPRLKYLNLSFNNLNGSVPSSVKSFPASSFQGNSLLCGAPLTPCPENTTAPSPSPTTPTEGPGTTNIGRGTAKKVLSTGAIVGIAVGGSVLLFIILAIITLCCAKKRDGGQDSTAVPKAKPGRSDNKAEEFGSGVQEAEKNKLVFFEGSSYNFDLEDLLRASAEVLGKGSYGTTYKAILEEGTTVVVKRLKEVAAGKREFEQQMEAVGRISPHVNVAPLRAYYFSKDEKLLVYDYYQGGNFSMLLHGNNEGGRAALDWETRLRICLEAARGISHIHSASGAKLLHGNIKSPNVLLTQELHVCVSDFGIAPLMSHHTLIPSRSLGYRAPEAIETRKHTQKSDVYSFGVLLLEMLTGKAAGKTTGHEEVVDLPKWVQSVVREEWTGEVFDVELIKQQHNVEEEMVQMLQIAMACVSKHPDSRPSMEEVVNMMEEIRPSGSGPGSGNRASSPEMIRSSDSPV.

The first 22 residues, 1-22, serve as a signal peptide directing secretion; sequence MMKIIAAFLFLLVTTFVSRCLS. LRR repeat units lie at residues 93–115, 117–138, 139–162, 163–185, and 186–206; these read ALRI…ILSL, FIRS…VLSH, RLVN…QNLT, QLTD…PPRL, and KYLN…VKSF. The tract at residues 222–249 is disordered; sequence LTPCPENTTAPSPSPTTPTEGPGTTNIG. Residues 226–247 are compositionally biased toward low complexity; it reads PENTTAPSPSPTTPTEGPGTTN. A helical transmembrane segment spans residues 260-280; the sequence is GAIVGIAVGGSVLLFIILAII. The disordered stretch occupies residues 289–315; the sequence is DGGQDSTAVPKAKPGRSDNKAEEFGSG. The region spanning 341–614 is the Protein kinase domain; it reads RASAEVLGKG…EEVVNMMEEI (274 aa). Serine 343 is subject to Phosphoserine. Residue 347–355 coordinates ATP; sequence LGKGSYGTT. Threonine 364 is subject to Phosphothreonine. An ATP-binding site is contributed by lysine 369. Threonine 441, threonine 514, and threonine 564 each carry phosphothreonine. Positions 612–640 are disordered; it reads EEIRPSGSGPGSGNRASSPEMIRSSDSPV.

It belongs to the protein kinase superfamily. Tyr protein kinase family.

The protein localises to the membrane. The chain is Probable inactive receptor kinase At3g08680 from Arabidopsis thaliana (Mouse-ear cress).